The chain runs to 314 residues: Regulator of microtubule dynamics protein 1 (314 aa).

Lys165 carries the N6-succinyllysine modification. 2 TPR repeats span residues 168-204 (AICL…NPKD) and 222-258 (PWYQ…DPNF).

This sequence belongs to the RMDN family. As to quaternary structure, interacts with microtubules.

Its subcellular location is the cytoplasm. It localises to the cytoskeleton. The protein resides in the spindle. It is found in the spindle pole. The protein is Regulator of microtubule dynamics protein 1 (RMDN1) of Pongo abelii (Sumatran orangutan).